A 535-amino-acid chain; its full sequence is Calcium-dependent protein kinase 7 (535 aa).

The tract at residues 1–29 (MGNCCGNPSSATNQSKQGKPKNKNNPFYS) is disordered. Gly2 carries the N-myristoyl glycine lipid modification. The Protein kinase domain maps to 59–317 (YDLGREVGRG…AAQVLEHTWI (259 aa)). Residues 65–73 (VGRGEFGIT) and Lys88 contribute to the ATP site. Residue Asp183 is the Proton acceptor of the active site. Position 223 is a phosphoserine (Ser223). An autoinhibitory domain region spans residues 323–353 (APNVSLGETVKARLKQFSVMNKLKKRALRVI). EF-hand domains follow at residues 360–395 (EEAAGIKEAFEMMDVNKRGKINLEELKYGLQKAGQQ), 396–431 (IADTDLQILMEATDVDGDGTLNYSEFVAVSVHLKKM), 432–467 (ANDEHLHKAFNFFDQNQSGYIEIDELREALNDELDN), and 468–504 (TSSEEVIAAIMQDVDTDKDGRISYEEFVAMMKAGTDW). Residues Asp373, Asn375, Lys379, Glu384, Asp409, Asp411, Asp413, Thr415, Glu420, Asp445, Asn447, Ser449, Tyr451, Glu456, Asp482, Asp484, Asp486, and Arg488 each coordinate Ca(2+). Residue Ser490 is modified to Phosphoserine. A Ca(2+)-binding site is contributed by Glu493.

It belongs to the protein kinase superfamily. Ser/Thr protein kinase family. CDPK subfamily.

It is found in the cell membrane. It carries out the reaction L-seryl-[protein] + ATP = O-phospho-L-seryl-[protein] + ADP + H(+). It catalyses the reaction L-threonyl-[protein] + ATP = O-phospho-L-threonyl-[protein] + ADP + H(+). With respect to regulation, activated by calcium. Autophosphorylation may play an important role in the regulation of the kinase activity. Functionally, may play a role in signal transduction pathways that involve calcium as a second messenger. This is Calcium-dependent protein kinase 7 (CPK7) from Arabidopsis thaliana (Mouse-ear cress).